The primary structure comprises 130 residues: Small ribosomal subunit protein uS9 (130 aa).

Residues 105–130 (TRDPRMKERKKYGLKKARRAPQFSKR) form a disordered region. Basic residues predominate over residues 111 to 130 (KERKKYGLKKARRAPQFSKR).

This sequence belongs to the universal ribosomal protein uS9 family.

In Acetivibrio thermocellus (strain ATCC 27405 / DSM 1237 / JCM 9322 / NBRC 103400 / NCIMB 10682 / NRRL B-4536 / VPI 7372) (Clostridium thermocellum), this protein is Small ribosomal subunit protein uS9.